Here is a 311-residue protein sequence, read N- to C-terminus: tRNA dimethylallyltransferase (311 aa).

Residue 12-19 (GPTASGKT) participates in ATP binding. 14 to 19 (TASGKT) serves as a coordination point for substrate. 3 interaction with substrate tRNA regions span residues 37 to 40 (DSAL), 161 to 165 (QRINR), and 241 to 246 (RCVGYR).

It belongs to the IPP transferase family. As to quaternary structure, monomer. It depends on Mg(2+) as a cofactor.

The catalysed reaction is adenosine(37) in tRNA + dimethylallyl diphosphate = N(6)-dimethylallyladenosine(37) in tRNA + diphosphate. In terms of biological role, catalyzes the transfer of a dimethylallyl group onto the adenine at position 37 in tRNAs that read codons beginning with uridine, leading to the formation of N6-(dimethylallyl)adenosine (i(6)A). The protein is tRNA dimethylallyltransferase of Histophilus somni (strain 2336) (Haemophilus somnus).